The primary structure comprises 158 residues: Transcriptional regulator MraZ (158 aa).

SpoVT-AbrB domains lie at 7 to 57 (THQN…PTAA) and 86 to 129 (AYPV…EPAA). Residues 133 to 158 (RRAEARTRSRQLALPAQGRRQGGADA) are disordered.

Belongs to the MraZ family. As to quaternary structure, forms oligomers.

It is found in the cytoplasm. Its subcellular location is the nucleoid. In Gluconacetobacter diazotrophicus (strain ATCC 49037 / DSM 5601 / CCUG 37298 / CIP 103539 / LMG 7603 / PAl5), this protein is Transcriptional regulator MraZ.